The primary structure comprises 305 residues: Oxygen-dependent coproporphyrinogen-III oxidase (305 aa).

S98 serves as a coordination point for substrate. 2 residues coordinate a divalent metal cation: H102 and H112. The active-site Proton donor is the H112. N114–R116 is a binding site for substrate. A divalent metal cation is bound by residues H151 and H181. Positions Y246–E281 are important for dimerization. Substrate is bound at residue G264–R266.

This sequence belongs to the aerobic coproporphyrinogen-III oxidase family. Homodimer. Requires a divalent metal cation as cofactor.

The protein resides in the cytoplasm. The catalysed reaction is coproporphyrinogen III + O2 + 2 H(+) = protoporphyrinogen IX + 2 CO2 + 2 H2O. Its pathway is porphyrin-containing compound metabolism; protoporphyrin-IX biosynthesis; protoporphyrinogen-IX from coproporphyrinogen-III (O2 route): step 1/1. In terms of biological role, involved in the heme biosynthesis. Catalyzes the aerobic oxidative decarboxylation of propionate groups of rings A and B of coproporphyrinogen-III to yield the vinyl groups in protoporphyrinogen-IX. This is Oxygen-dependent coproporphyrinogen-III oxidase from Vibrio vulnificus (strain CMCP6).